The primary structure comprises 130 residues: Small ribosomal subunit protein uS9 (130 aa).

The protein belongs to the universal ribosomal protein uS9 family.

The sequence is that of Small ribosomal subunit protein uS9 from Pseudomonas aeruginosa (strain LESB58).